A 329-amino-acid polypeptide reads, in one-letter code: BRISC and BRCA1-A complex member 1 (329 aa).

M1 bears the N-acetylmethionine mark. Residues 1–84 (MEVAEPSSPT…VPPPAPEVQI (84 aa)) are disordered. S8 is modified (phosphoserine). A compositionally biased stretch (acidic residues) spans 10-19 (TEEEEEEEEH). S29, S49, S57, and S62 each carry phosphoserine. Phosphothreonine is present on T65. Residue S66 is modified to Phosphoserine. A VWFA-like region spans residues 95-298 (VIICLDLSEE…LELHNCMAKL (204 aa)).

Belongs to the BABAM1 family. In terms of assembly, component of the ARISC complex, at least composed of UIMC1/RAP80, ABRAXAS1, BRCC3/BRCC36, BABAM2 and BABAM1/NBA1. Component of the BRCA1-A complex, at least composed of BRCA1, BARD1, UIMC1/RAP80, ABRAXAS1, BRCC3/BRCC36, BABAM2 and BABAM1/NBA1. In the BRCA1-A complex, interacts directly with ABRAXAS1 and BABAM2. Component of the BRISC complex, at least composed of ABRAXAS2, BRCC3/BRCC36, BABAM2 and BABAM1/NBA1. Identified in a complex with SHMT2 and the other subunits of the BRISC complex.

It localises to the cytoplasm. The protein localises to the nucleus. In terms of biological role, component of the BRCA1-A complex, a complex that specifically recognizes 'Lys-63'-linked ubiquitinated histones H2A and H2AX at DNA lesions sites, leading to target the BRCA1-BARD1 heterodimer to sites of DNA damage at double-strand breaks (DSBs). The BRCA1-A complex also possesses deubiquitinase activity that specifically removes 'Lys-63'-linked ubiquitin on histones H2A and H2AX. In the BRCA1-A complex, it is required for the complex integrity and its localization at DSBs. Component of the BRISC complex, a multiprotein complex that specifically cleaves 'Lys-63'-linked ubiquitin in various substrates. In these 2 complexes, it is probably required to maintain the stability of BABAM2 and help the 'Lys-63'-linked deubiquitinase activity mediated by BRCC3/BRCC36 component. The BRISC complex is required for normal mitotic spindle assembly and microtubule attachment to kinetochores via its role in deubiquitinating NUMA1. Plays a role in interferon signaling via its role in the deubiquitination of the interferon receptor IFNAR1; deubiquitination increases IFNAR1 activity by enhancing its stability and cell surface expression. Down-regulates the response to bacterial lipopolysaccharide (LPS) via its role in IFNAR1 deubiquitination. The polypeptide is BRISC and BRCA1-A complex member 1 (BABAM1) (Homo sapiens (Human)).